Consider the following 370-residue polypeptide: 3-isopropylmalate dehydrogenase 1 (370 aa).

4 residues coordinate substrate: Arg98, Arg108, Arg136, and Asp227. Mg(2+) is bound by residues Asp227, Asp251, and Asp255. 289–301 (GSAPDIAGQGIAN) lines the NAD(+) pocket.

It belongs to the isocitrate and isopropylmalate dehydrogenases family. LeuB type 1 subfamily. Homodimer. Mg(2+) serves as cofactor. It depends on Mn(2+) as a cofactor.

The protein localises to the cytoplasm. It carries out the reaction (2R,3S)-3-isopropylmalate + NAD(+) = 4-methyl-2-oxopentanoate + CO2 + NADH. Its pathway is amino-acid biosynthesis; L-leucine biosynthesis; L-leucine from 3-methyl-2-oxobutanoate: step 3/4. Its function is as follows. Catalyzes the oxidation of 3-carboxy-2-hydroxy-4-methylpentanoate (3-isopropylmalate) to 3-carboxy-4-methyl-2-oxopentanoate. The product decarboxylates to 4-methyl-2 oxopentanoate. The polypeptide is 3-isopropylmalate dehydrogenase 1 (Bordetella bronchiseptica (strain ATCC BAA-588 / NCTC 13252 / RB50) (Alcaligenes bronchisepticus)).